A 146-amino-acid chain; its full sequence is Large ribosomal subunit protein uL15 (146 aa).

Basic and acidic residues predominate over residues 1–13 (MKLHELKPAEGSR). A disordered region spans residues 1–59 (MKLHELKPAEGSRKVRNRVGRGTSSGNGKTSGRGQKGQKARSGGGVRLGFEGGQTPLFR). 2 stretches are compositionally biased toward gly residues: residues 23–35 (TSSG…GRGQ) and 42–52 (SGGGVRLGFEG).

This sequence belongs to the universal ribosomal protein uL15 family. Part of the 50S ribosomal subunit.

Its function is as follows. Binds to the 23S rRNA. In Streptococcus agalactiae serotype Ia (strain ATCC 27591 / A909 / CDC SS700), this protein is Large ribosomal subunit protein uL15.